Here is a 217-residue protein sequence, read N- to C-terminus: Putative cobalt transport protein CbiM (217 aa).

Helical transmembrane passes span 8–28 (LPPE…VYGA), 44–64 (LIAV…PSVT), 74–94 (GIAV…IVLL), 107–127 (TLGA…WIAF), 139–161 (VFAA…LALA), and 181–201 (IFAV…VMLV).

Belongs to the CbiM family. In terms of assembly, forms an energy-coupling factor (ECF) transporter complex composed of an ATP-binding protein (A component, CbiO), a transmembrane protein (T component, CbiQ) and 2 possible substrate-capture proteins (S components, CbiM and CbiN) of unknown stoichimetry.

Its subcellular location is the cell membrane. The protein operates within cofactor biosynthesis; adenosylcobalamin biosynthesis. Functionally, part of the energy-coupling factor (ECF) transporter complex CbiMNOQ involved in cobalt import. In Archaeoglobus fulgidus (strain ATCC 49558 / DSM 4304 / JCM 9628 / NBRC 100126 / VC-16), this protein is Putative cobalt transport protein CbiM.